We begin with the raw amino-acid sequence, 457 residues long: Phosphoglucosamine mutase (457 aa).

The Phosphoserine intermediate role is filled by serine 103. Positions 103, 244, 246, and 248 each coordinate Mg(2+). Serine 103 is subject to Phosphoserine.

The protein belongs to the phosphohexose mutase family. Mg(2+) is required as a cofactor. Post-translationally, activated by phosphorylation.

It catalyses the reaction alpha-D-glucosamine 1-phosphate = D-glucosamine 6-phosphate. Its function is as follows. Catalyzes the conversion of glucosamine-6-phosphate to glucosamine-1-phosphate. The polypeptide is Phosphoglucosamine mutase (Granulibacter bethesdensis (strain ATCC BAA-1260 / CGDNIH1)).